We begin with the raw amino-acid sequence, 65 residues long: Toxin NaTx-22 (65 aa).

In terms of domain architecture, LCN-type CS-alpha/beta spans 1 to 64 (KDGYPVIKTT…TYPIPGKTCK (64 aa)). Disulfide bonds link cysteine 12–cysteine 63, cysteine 16–cysteine 39, cysteine 25–cysteine 44, and cysteine 29–cysteine 46.

It belongs to the long (4 C-C) scorpion toxin superfamily. Sodium channel inhibitor family. As to expression, expressed by the venom gland.

It localises to the secreted. Its function is as follows. Probable sodium channel inhibitor. The chain is Toxin NaTx-22 from Centruroides sculpturatus (Arizona bark scorpion).